A 324-amino-acid chain; its full sequence is Glyoxylate/hydroxypyruvate reductase B (324 aa).

Residues Arg-237 and Glu-266 contribute to the active site. Catalysis depends on His-285, which acts as the Proton donor.

The protein belongs to the D-isomer specific 2-hydroxyacid dehydrogenase family. GhrB subfamily. In terms of assembly, homodimer.

Its subcellular location is the cytoplasm. The enzyme catalyses glycolate + NADP(+) = glyoxylate + NADPH + H(+). It carries out the reaction (R)-glycerate + NAD(+) = 3-hydroxypyruvate + NADH + H(+). It catalyses the reaction (R)-glycerate + NADP(+) = 3-hydroxypyruvate + NADPH + H(+). Functionally, catalyzes the NADPH-dependent reduction of glyoxylate and hydroxypyruvate into glycolate and glycerate, respectively. The sequence is that of Glyoxylate/hydroxypyruvate reductase B from Escherichia coli (strain SMS-3-5 / SECEC).